The primary structure comprises 287 residues: ATP synthase subunit a (287 aa).

The next 6 helical transmembrane spans lie at 37-57 (LDSV…MWLA), 96-116 (FIAP…AMDL), 149-169 (LGLS…IKGL), 187-207 (PVFA…EYVA), 224-244 (ELVF…LSGV), and 266-286 (TLQA…AHEA).

It belongs to the ATPase A chain family. As to quaternary structure, F-type ATPases have 2 components, CF(1) - the catalytic core - and CF(0) - the membrane proton channel. CF(1) has five subunits: alpha(3), beta(3), gamma(1), delta(1), epsilon(1). CF(0) has three main subunits: a(1), b(2) and c(9-12). The alpha and beta chains form an alternating ring which encloses part of the gamma chain. CF(1) is attached to CF(0) by a central stalk formed by the gamma and epsilon chains, while a peripheral stalk is formed by the delta and b chains.

The protein localises to the cell inner membrane. In terms of biological role, key component of the proton channel; it plays a direct role in the translocation of protons across the membrane. The polypeptide is ATP synthase subunit a (Acidovorax sp. (strain JS42)).